We begin with the raw amino-acid sequence, 232 residues long: Protein FAM246B (232 aa).

The span at 19–31 (EVLRRVTGRRRDP) shows a compositional bias: basic and acidic residues. Disordered regions lie at residues 19–47 (EVLR…RAPG), 80–101 (AAGA…VCGE), 151–179 (ALLP…GPTL), and 191–232 (AASR…GGGD). Residues 211–220 (APARKNHKKM) are compositionally biased toward basic residues.

The protein belongs to the FAM246 family.

This chain is Protein FAM246B, found in Homo sapiens (Human).